Here is a 376-residue protein sequence, read N- to C-terminus: Cyclin-dependent kinase 9-A (376 aa).

Residues 19–319 enclose the Protein kinase domain; sequence YERLAKIGQG…SDDALNNDFF (301 aa). ATP is bound by residues 25–33 and Lys48; that span reads IGQGTFGEV. Asp153 serves as the catalytic Proton acceptor. Residues 345 to 376 are disordered; sequence PPRRRGGHMPQQPANQARNPAATNQSEFERVF. The span at 354 to 369 shows a compositional bias: low complexity; sequence PQQPANQARNPAATNQ.

It belongs to the protein kinase superfamily. CMGC Ser/Thr protein kinase family. CDC2/CDKX subfamily. In terms of assembly, associates with cyclin-T to form P-TEFb.

The protein localises to the nucleus. It catalyses the reaction L-seryl-[protein] + ATP = O-phospho-L-seryl-[protein] + ADP + H(+). The enzyme catalyses L-threonyl-[protein] + ATP = O-phospho-L-threonyl-[protein] + ADP + H(+). It carries out the reaction [DNA-directed RNA polymerase] + ATP = phospho-[DNA-directed RNA polymerase] + ADP + H(+). Its function is as follows. Member of the cyclin-dependent kinase pair (CDK9/cyclin-T) complex, also called positive transcription elongation factor B (P-TEFb), which is proposed to facilitate the transition from abortive to production elongation by phosphorylating the CTD (C-terminal domain) of the large subunit of RNA polymerase II (RNAP II) and SUPT5H. The protein is Cyclin-dependent kinase 9-A (cdk9-a) of Xenopus laevis (African clawed frog).